The primary structure comprises 264 residues: S-adenosylmethionine decarboxylase proenzyme (264 aa).

The active-site Schiff-base intermediate with substrate; via pyruvic acid is Ser113. Pyruvic acid (Ser); by autocatalysis is present on Ser113. His118 (proton acceptor; for processing activity) is an active-site residue. Cys141 (proton donor; for catalytic activity) is an active-site residue.

This sequence belongs to the prokaryotic AdoMetDC family. Type 2 subfamily. As to quaternary structure, heterooctamer of four alpha and four beta chains arranged as a tetramer of alpha/beta heterodimers. Pyruvate is required as a cofactor. In terms of processing, is synthesized initially as an inactive proenzyme. Formation of the active enzyme involves a self-maturation process in which the active site pyruvoyl group is generated from an internal serine residue via an autocatalytic post-translational modification. Two non-identical subunits are generated from the proenzyme in this reaction, and the pyruvate is formed at the N-terminus of the alpha chain, which is derived from the carboxyl end of the proenzyme. The post-translation cleavage follows an unusual pathway, termed non-hydrolytic serinolysis, in which the side chain hydroxyl group of the serine supplies its oxygen atom to form the C-terminus of the beta chain, while the remainder of the serine residue undergoes an oxidative deamination to produce ammonia and the pyruvoyl group blocking the N-terminus of the alpha chain.

It catalyses the reaction S-adenosyl-L-methionine + H(+) = S-adenosyl 3-(methylsulfanyl)propylamine + CO2. The protein operates within amine and polyamine biosynthesis; S-adenosylmethioninamine biosynthesis; S-adenosylmethioninamine from S-adenosyl-L-methionine: step 1/1. Its function is as follows. Catalyzes the decarboxylation of S-adenosylmethionine to S-adenosylmethioninamine (dcAdoMet), the propylamine donor required for the synthesis of the polyamines spermine and spermidine from the diamine putrescine. This is S-adenosylmethionine decarboxylase proenzyme from Pseudomonas syringae pv. tomato (strain ATCC BAA-871 / DC3000).